A 946-amino-acid polypeptide reads, in one-letter code: Ent-kaur-16-ene synthase (946 aa).

Positions 656, 660, 839, 840, 843, and 847 each coordinate Mg(2+). A DEXXE motif motif is present at residues 656-660; the sequence is DEFFE.

The protein belongs to the terpene synthase family. Mg(2+) serves as cofactor.

The catalysed reaction is ent-copalyl diphosphate = ent-kaur-16-ene + diphosphate. It catalyses the reaction (2E,6E,10E)-geranylgeranyl diphosphate = ent-copalyl diphosphate. It functions in the pathway plant hormone biosynthesis; gibberellin biosynthesis. Catalyzes the conversion of geranylgeranyl diphosphate to the gibberellin precursor ent-kaurene diphosphate in a two step process. This chain is Ent-kaur-16-ene synthase, found in Phaeosphaeria sp. (strain L487).